The following is a 61-amino-acid chain: Short neurotoxin 2 (61 aa).

4 disulfides stabilise this stretch: Cys-3-Cys-23, Cys-17-Cys-40, Cys-42-Cys-53, and Cys-54-Cys-59.

It belongs to the three-finger toxin family. Short-chain subfamily. Type I alpha-neurotoxin sub-subfamily. As to expression, expressed by the venom gland.

It localises to the secreted. In terms of biological role, binds to muscle nicotinic acetylcholine receptor (nAChR) and inhibit acetylcholine from binding to the receptor, thereby impairing neuromuscular transmission. This is Short neurotoxin 2 from Hemachatus haemachatus (Rinkhals).